Here is an 81-residue protein sequence, read N- to C-terminus: Small ribosomal subunit protein uS17 (81 aa).

Belongs to the universal ribosomal protein uS17 family. As to quaternary structure, part of the 30S ribosomal subunit.

Functionally, one of the primary rRNA binding proteins, it binds specifically to the 5'-end of 16S ribosomal RNA. The chain is Small ribosomal subunit protein uS17 from Hyphomonas neptunium (strain ATCC 15444).